A 171-amino-acid chain; its full sequence is MSQSLRPYLTAVRYSLEAALTLSNFSSQEVERHNRPEVEVPNTSAELLLQPMHISRNENEQVLIEPSVNSVRMSLMVKQADEIEQILVHKFTRFLEQRAEAFYILRRVPIPGYSISFLITNKHTESMKTGKLVDFIIEFMEDVDKEISEIKLFLNARARFVAEAYLDEFVY.

It belongs to the ARPC4 family. Component of the Arp2/3 complex composed of ARP2, ARP3, ARC40/p41-ARC, ARC35/p34-ARC, ARC18/p21-ARC, ARC19/p20-ARC and ARC16/p16-ARC.

The protein resides in the cytoplasm. It localises to the cytoskeleton. Its subcellular location is the actin patch. In terms of biological role, functions as actin-binding component of the Arp2/3 complex which is involved in regulation of actin polymerization and together with an activating nucleation-promoting factor (NPF) mediates the formation of branched actin networks. Seems to contact the mother actin filament. In Saccharomyces cerevisiae (strain ATCC 204508 / S288c) (Baker's yeast), this protein is Actin-related protein 2/3 complex subunit 4 (ARC19).